A 91-amino-acid polypeptide reads, in one-letter code: YcgL domain-containing protein Ent638_2370 (91 aa).

The YcgL domain maps to 1-85; the sequence is MFCVIYRSAK…PPENLLKQHL (85 aa).

This Enterobacter sp. (strain 638) protein is YcgL domain-containing protein Ent638_2370.